We begin with the raw amino-acid sequence, 445 residues long: MSKVVRSSKYRHVFAAQPKKEECYQNLKVTKSAWDSNYVAANTRYFGVIWDAAGGGSFAVIPHEASGKTTSVPLFNGHKSAVLDIAFHPFNENLVGSVSEDCNICIWGIPEGGLTDSISTPLQTLSGHKRKVGTISFNPVADNVAVTSSGDFLVKTWDVEQGKNLTTVEGHSDMITSCEWNHNGSQIVTTCKDKKARVFDPRTNSIVNEVVCHQGVKNSRAIFAKDKVITVGFSKTSERELHIYDPRAFTTPLSAQVVDSASGLLMPFYDADNSILYLAGKGDGNIRYYELVDESPYIHFLSEFKSATPQRGLCFLPKRCLNTSECEIARGLKVTPFTVEPISFRVPRKSDIFQDDIYPDTYAGEPSLTAEQWVSGTNAEPKTVSLAGGFVKKASAVEFKPVVQVQEGPKNEKELREEYEKLKIRVAYLESEIVKKDAKIKELTN.

WD repeat units lie at residues 77–117 (GHKS…LTDS), 127–167 (GHKR…NLTT), 170–209 (GHSDMITSCEWNHNGSQIVTTCKDKKARVFDPRTNSIVNE), and 259–299 (DSAS…PYIH). Residues 410–444 (KNEKELREEYEKLKIRVAYLESEIVKKDAKIKELT) adopt a coiled-coil conformation.

This sequence belongs to the WD repeat coronin family. As to quaternary structure, binds to F-actin.

It is found in the cell surface. Its function is as follows. Required for normal motility. Participates in cytokinesis. The sequence is that of Coronin-A (corA) from Dictyostelium discoideum (Social amoeba).